A 257-amino-acid chain; its full sequence is Putative aldolase class 2 protein CC_1201 (257 aa).

Zn(2+) is bound by residues His114, His116, and His177.

It belongs to the aldolase class II family. Zn(2+) is required as a cofactor.

The chain is Putative aldolase class 2 protein CC_1201 from Caulobacter vibrioides (strain ATCC 19089 / CIP 103742 / CB 15) (Caulobacter crescentus).